A 194-amino-acid chain; its full sequence is Large ribosomal subunit protein eL15 (194 aa).

The disordered stretch occupies residues 160–194; it reads RGLTSAGKKGRGLMYKGKGAEKVRPSVRANSKKAK.

This sequence belongs to the eukaryotic ribosomal protein eL15 family.

The chain is Large ribosomal subunit protein eL15 from Methanococcus maripaludis (strain C6 / ATCC BAA-1332).